Consider the following 328-residue polypeptide: Tetraacyldisaccharide 4'-kinase (328 aa).

59 to 66 serves as a coordination point for ATP; the sequence is TAGGNGKT.

The protein belongs to the LpxK family.

The enzyme catalyses a lipid A disaccharide + ATP = a lipid IVA + ADP + H(+). It functions in the pathway glycolipid biosynthesis; lipid IV(A) biosynthesis; lipid IV(A) from (3R)-3-hydroxytetradecanoyl-[acyl-carrier-protein] and UDP-N-acetyl-alpha-D-glucosamine: step 6/6. Its function is as follows. Transfers the gamma-phosphate of ATP to the 4'-position of a tetraacyldisaccharide 1-phosphate intermediate (termed DS-1-P) to form tetraacyldisaccharide 1,4'-bis-phosphate (lipid IVA). The chain is Tetraacyldisaccharide 4'-kinase from Aliivibrio fischeri (strain ATCC 700601 / ES114) (Vibrio fischeri).